We begin with the raw amino-acid sequence, 122 residues long: MPTIKQLIRNTRQPIRNVTKSPALRGCPQRRGTCTRVYTITPKKPNSALRKVARVRLTSGFEITAYIPGIGHNSQEHSVVLVRGGRVKDLPGVRYHIVRGTLDAVGVKDRQQGRSYGVKKPK.

The protein belongs to the universal ribosomal protein uS12 family. As to quaternary structure, part of the 30S ribosomal subunit.

The protein resides in the plastid. The protein localises to the chloroplast. Functionally, with S4 and S5 plays an important role in translational accuracy. Located at the interface of the 30S and 50S subunits. The protein is Small ribosomal subunit protein uS12c (rps12) of Chloranthus spicatus (Chulantree).